The following is a 108-amino-acid chain: MAMKKANKLTQTAMIKQILKRCSSLGKKQSNVYGEDENGSPLNVPKGHFVVYVGENRVRYVVPISFLTRPEFQLLLQQAEEEFGFDHDMGLTIPCEEVVFRSLTSMLR.

Belongs to the ARG7 family. Expressed in organ primordia. Hardly observed in leaves.

Its subcellular location is the cell membrane. In terms of biological role, provide a mechanistic link between auxin and plasma membrane H(+)-ATPases (PM H(+)-ATPases, e.g. AHA1 and AHA2), and triggers PM H(+)-ATPases activity by promoting phosphorylation of their C-terminal autoinhibitory domain as a result of PP2C-D subfamily of type 2C phosphatases inhibition, thus leading to the acidification of the apoplast and the facilitation of solutes and water uptake to drive cell expansion. Triggers plant growth probably by promoting cell elongation. Regulates branch angles and bending. This is Protein SMALL AUXIN UP-REGULATED RNA 51 from Arabidopsis thaliana (Mouse-ear cress).